The primary structure comprises 480 residues: Coronin-2B (480 aa).

WD repeat units follow at residues 85–125 (GHQG…LKRN), 135–177 (GHSR…KMID), 179–217 (HTDV…VLQE), 220–263 (CKNH…MPMI), and 265–308 (EEID…PYLS). The stretch at 436–479 (NELLRMFFRQQDEIRRLKEELAQKDIRLRQLQLELKNLRNNPKN) forms a coiled coil.

This sequence belongs to the WD repeat coronin family. In terms of assembly, binds to F-actin and to vinculin.

The protein localises to the cytoplasm. It is found in the cytoskeleton. Functionally, may play a role in the reorganization of neuronal actin structure. This chain is Coronin-2B (Coro2b), found in Mus musculus (Mouse).